Here is a 418-residue protein sequence, read N- to C-terminus: Diaminopimelate decarboxylase (418 aa).

Lys53 is modified (N6-(pyridoxal phosphate)lysine). Residues Gly223 and 264–267 (EPGR) each bind pyridoxal 5'-phosphate. Residues Arg267, Arg303, and Tyr307 each coordinate substrate. Cys338 serves as the catalytic Proton donor. The substrate site is built by Glu339 and Tyr374. Tyr374 is a pyridoxal 5'-phosphate binding site.

Belongs to the Orn/Lys/Arg decarboxylase class-II family. LysA subfamily. As to quaternary structure, homodimer. Requires pyridoxal 5'-phosphate as cofactor.

The enzyme catalyses meso-2,6-diaminopimelate + H(+) = L-lysine + CO2. It participates in amino-acid biosynthesis; L-lysine biosynthesis via DAP pathway; L-lysine from DL-2,6-diaminopimelate: step 1/1. Specifically catalyzes the decarboxylation of meso-diaminopimelate (meso-DAP) to L-lysine. This is Diaminopimelate decarboxylase from Buchnera aphidicola subsp. Baizongia pistaciae (strain Bp).